A 96-amino-acid chain; its full sequence is Large ribosomal subunit protein bL28 (96 aa).

The disordered stretch occupies residues Met-1–Lys-24.

Belongs to the bacterial ribosomal protein bL28 family.

The protein is Large ribosomal subunit protein bL28 of Sinorhizobium fredii (strain NBRC 101917 / NGR234).